A 291-amino-acid chain; its full sequence is ATP synthase gamma chain (291 aa).

The protein belongs to the ATPase gamma chain family. F-type ATPases have 2 components, CF(1) - the catalytic core - and CF(0) - the membrane proton channel. CF(1) has five subunits: alpha(3), beta(3), gamma(1), delta(1), epsilon(1). CF(0) has three main subunits: a, b and c.

Its subcellular location is the cell membrane. Its function is as follows. Produces ATP from ADP in the presence of a proton gradient across the membrane. The gamma chain is believed to be important in regulating ATPase activity and the flow of protons through the CF(0) complex. The chain is ATP synthase gamma chain from Buchnera aphidicola subsp. Schizaphis graminum (strain Sg).